A 416-amino-acid chain; its full sequence is Photosystem II stability/assembly factor HCF136, chloroplastic (416 aa).

The N-terminal 36 residues, 1–36, are a transit peptide targeting the chloroplast; it reads MATTASLHLHLHLLLSSSRRRCRLLVPRAHTDSIST. Residues 37–67 constitute a thylakoid transit peptide; the sequence is GRRRFIADTATASAAAAVGPLVLPRTPLARA.

The protein belongs to the Ycf48 family.

It is found in the plastid. It localises to the chloroplast thylakoid lumen. Its function is as follows. Essential for photosystem II (PSII) biogenesis; required for assembly of an early intermediate in PSII assembly that includes D2 (psbD) and cytochrome b559. This is Photosystem II stability/assembly factor HCF136, chloroplastic (HCF136) from Oryza sativa subsp. japonica (Rice).